A 567-amino-acid chain; its full sequence is TNF receptor-associated factor 3 (567 aa).

The tract at residues 1–26 (MESSKKMDAAGTLQPNPPLKLQPDRG) is disordered. C55 participates in a covalent cross-link: Glycyl cysteine thioester (Cys-Gly) (interchain with G-Cter in ubiquitin). The RING-type zinc finger occupies 67–76 (CGHRFCESCM). K106 participates in a covalent cross-link: Glycyl lysine isopeptide (Lys-Gly) (interchain with G-Cter in ubiquitin). C123 is covalently cross-linked (Glycyl cysteine thioester (Cys-Gly) (interchain with G-Cter in ubiquitin)). 2 TRAF-type zinc fingers span residues 134 to 189 (VHLK…IKLQ) and 190 to 248 (KHED…QQIK). Glycyl lysine isopeptide (Lys-Gly) (interchain with G-Cter in ubiquitin) cross-links involve residues K155 and K167. Positions 266 to 337 (SNSLEKKVSL…KLKELDKEIR (72 aa)) form a coiled coil. A Glycyl lysine isopeptide (Lys-Gly) (interchain with G-Cter in ubiquitin) cross-link involves residue K328. Residues 414–559 (NGVLIWKIRD…DDTIFIKVIV (146 aa)) enclose the MATH domain.

This sequence belongs to the TNF receptor-associated factor family. A subfamily. In terms of assembly, homotrimer. Heterotrimer with TRAF2 and TRAF5. Interacts with LTBR/TNFRSF3, TNFRSF4, TNFRSF5/CD40, TNFRSF8/CD30, TNFRSF13C TNFRSF17/BCMA, TLR4 and EDAR. Interacts with MAP3K5, MAP3K14, TRAIP/TRIP, TDP2/TTRAP, TANK/ITRAF and TRAF3IP1. Interaction with TNFRSF5/CD40 is modulated by TANK/ITRAF, which competes for the same binding site. Interacts with TICAM1. Interacts with TRAFD1. Interacts with OTUB1, OTUB2 and OTUD5. Interacts with RNF216, OPTN and TBK1. Identified in a complex with TRAF2, MAP3K14 and BIRC3. Upon exposure to bacterial lipopolysaccharide (LPS), recruited to a transient complex containing TLR4, TRAF3, TRAF6, IKBKG, MAP3K7, MYD88, TICAM1, BIRC2, BIRC3 and UBE2N. Interacts (via RING-type zinc finger domain) with SRC. Interacts with CARD14. Interacts (via MATH domain) with PTPN22; the interaction promotes TRAF3 polyubiquitination. Interacts with MAVS. Directly interacts with DDX3X; this interaction stimulates TRAF3 'Lys-63' ubiquitination. Interacts with IRF3. Interacts with IKBKE in the course of viral infection. Interacts with TRIM35. Interacts with GAPDH; promoting TRAF3 ubiquitination. Interacts with PPP3CA and PPP3CB. Interacts with RALGDS. Interacts with FBXO11. Post-translationally, undergoes 'Lys-48'-linked polyubiquitination, leading to its proteasomal degradation in response to signaling by TNFSF13B, TLR4 or through CD40. 'Lys-48'-linked polyubiquitinated form is deubiquitinated by OTUD7B, preventing TRAF3 proteolysis and over-activation of non-canonical NF-kappa-B. Undergoes 'Lys-63'-linked ubiquitination during early stages of virus infection, and 'Lys-48'-linked ubiquitination during later stages. Undergoes both 'Lys-48'-linked and 'Lys-63'-linked ubiquitination in response to TLR3 and TLR4 signaling. 'Lys-63'-linked ubiquitination can be mediated by TRIM35. Deubiquitinated by OTUB1, OTUB2 and OTUD5. Undergoes 'Lys-63'-linked deubiquitination by MYSM1 to terminate the pattern-recognition receptors/PRRs pathways. Ubiquitinated at Lys-328 by the SCF(FBXL2) complex, leading to its degradation by the proteasome. In terms of processing, undergoes 'Lys-48'-linked polyubiquitination, leading to its proteasomal degradation in response to signaling by TNFSF13B, TLR4 or through CD40. 'Lys-48'-linked polyubiquitinated form is deubiquitinated by OTUD7B, preventing TRAF3 proteolysis and over-activation of non-canonical NF-kappa-B. Undergoes 'Lys-63'-linked ubiquitination during early stages of virus infection, and 'Lys-48'-linked ubiquitination during later stages. Undergoes both 'Lys-48'-linked and 'Lys-63'-linked ubiquitination in response to TLR3 and TLR4 signaling. 'Lys-63'-linked ubiquitination can be mediated by TRIM35. Deubiquitinated by OTUB1, OTUB2 and OTUD5. Undergoes 'Lys-63'-linked deubiquitination by MYSM1 to terminate the pattern-recognition receptors/PRRs pathways. Also undergoes 'Lys-29'-linked ubiquitination on Cys-55 and Cys-123 by NEDD4L; leading to increased 'Lys-48'- and 'Lys-63'-linked ubiquitination as well as increased binding to TBK1. TLR4 signals emanating from bacteria containing vesicles trigger 'Lys-33'-linked polyubiquitination that promotes the assembly of the exocyst complex thereby connecting innate immune signaling to the cellular trafficking apparatus. Deubiquitinated by USP25 during viral infection, leading to TRAF3 stabilization and type I interferon production. 'Lys-63'-linked ubiquitination by FBXO11 in a NEDD8-dependent manner promotes the amplification of IFN-I signaling. As to expression, detected in bone marrow macrophages and spleen B-cells (at protein level). In adult, highest in brain. Also found in kidney, heart, thymus, spleen, lung, muscle, testis and ovary. Not found in liver.

Its subcellular location is the cytoplasm. It is found in the endosome. The protein resides in the mitochondrion. The enzyme catalyses S-ubiquitinyl-[E2 ubiquitin-conjugating enzyme]-L-cysteine + [acceptor protein]-L-lysine = [E2 ubiquitin-conjugating enzyme]-L-cysteine + N(6)-ubiquitinyl-[acceptor protein]-L-lysine.. Cytoplasmic E3 ubiquitin ligase that regulates various signaling pathways, such as the NF-kappa-B, mitogen-activated protein kinase (MAPK) and interferon regulatory factor (IRF) pathways, and thus controls a lot of biological processes in both immune and non-immune cell types. In TLR and RLR signaling pathways, acts as an E3 ubiquitin ligase promoting the synthesis of 'Lys-63'-linked polyubiquitin chains on several substrates such as ASC that lead to the activation of the type I interferon response or the inflammasome. Following the activation of certain TLRs such as TLR4, acts as a negative NF-kappa-B regulator, possibly to avoid unregulated inflammatory response, and its degradation via 'Lys-48'-linked polyubiquitination is required for MAPK activation and production of inflammatory cytokines. Alternatively, when TLR4 orchestrates bacterial expulsion, TRAF3 undergoes 'Lys-33'-linked polyubiquitination and subsequently binds to RALGDS, mobilizing the exocyst complex to rapidly expel intracellular bacteria back for clearance. Also acts as a constitutive negative regulator of the alternative NF-kappa-B pathway, which controls B-cell survival and lymphoid organ development. Required for normal antibody isotype switching from IgM to IgG. Plays a role T-cell dependent immune responses. Down-regulates proteolytic processing of NFKB2, and thereby inhibits non-canonical activation of NF-kappa-B. Promotes ubiquitination and proteasomal degradation of MAP3K14. This chain is TNF receptor-associated factor 3, found in Mus musculus (Mouse).